Consider the following 1892-residue polypeptide: Plexin A3 (1892 aa).

Positions 1–20 (MRSLWLLVFSFSVLTGTNMA) are cleaved as a signal peptide. Residues 21 to 509 (FPMILSERPE…SDKQVSRLPV (489 aa)) form the Sema domain. Topologically, residues 21–1240 (FPMILSERPE…IYSDSTLTLP (1220 aa)) are extracellular. N-linked (GlcNAc...) asparagine glycosylation is present at N68. 9 disulfide bridges follow: C86/C95, C121/C129, C283/C404, C299/C355, C373/C392, C512/C529, C518/C560, C521/C538, and C532/C544. N569 carries an N-linked (GlcNAc...) asparagine glycan. The cysteines at positions 595 and 615 are disulfide-linked. IPT/TIG domains are found at residues 861–955 (PRIT…YSFV), 957–1041 (PSFS…YIYT), 1044–1143 (PNIS…FTYY), and 1146–1232 (PTFE…LHIY). An N-linked (GlcNAc...) asparagine glycan is attached at N1183. The chain crosses the membrane as a helical span at residues 1241-1261 (AIIGIGAGGGVLLIAIIAVLI). Residues 1262-1315 (AYKRKTRDADRTLKRLQLQMDNLESRVALECKEAFAELQTDIQELTNDMDGVKI) adopt a coiled-coil conformation. Residues 1262-1892 (AYKRKTRDAD…QAINLMSGSS (631 aa)) lie on the Cytoplasmic side of the membrane.

The protein belongs to the plexin family. As to expression, detected in primary motor neurons in the embryonic nervous system.

It is found in the cell membrane. Coreceptor for class 3 semaphorins. Necessary for signaling by class 3 semaphorins and subsequent remodeling of the cytoskeleton. Plays a role in axon guidance in the developing nervous system. Class 3 semaphorins bind to a complex composed of a neuropilin and a plexin. The plexin modulates the affinity of the complex for specific semaphorins, and its cytoplasmic domain is required for the activation of down-stream signaling events in the cytoplasm. This chain is Plexin A3 (plxna3), found in Danio rerio (Zebrafish).